The sequence spans 410 residues: Arginine deiminase (410 aa).

The active-site Amidino-cysteine intermediate is the cysteine 398.

Belongs to the arginine deiminase family. In terms of assembly, homodimer.

Its subcellular location is the cytoplasm. The enzyme catalyses L-arginine + H2O = L-citrulline + NH4(+). Its pathway is amino-acid degradation; L-arginine degradation via ADI pathway; carbamoyl phosphate from L-arginine: step 1/2. The sequence is that of Arginine deiminase (arcA) from Mycoplasmopsis arginini (Mycoplasma arginini).